The following is a 149-amino-acid chain: Transcription antitermination protein NusB (149 aa).

This sequence belongs to the NusB family.

In terms of biological role, involved in transcription antitermination. Required for transcription of ribosomal RNA (rRNA) genes. Binds specifically to the boxA antiterminator sequence of the ribosomal RNA (rrn) operons. This chain is Transcription antitermination protein NusB, found in Caulobacter vibrioides (strain ATCC 19089 / CIP 103742 / CB 15) (Caulobacter crescentus).